A 90-amino-acid polypeptide reads, in one-letter code: Probable Fe(2+)-trafficking protein (90 aa).

This sequence belongs to the Fe(2+)-trafficking protein family.

Could be a mediator in iron transactions between iron acquisition and iron-requiring processes, such as synthesis and/or repair of Fe-S clusters in biosynthetic enzymes. This chain is Probable Fe(2+)-trafficking protein, found in Nitrosospira multiformis (strain ATCC 25196 / NCIMB 11849 / C 71).